Here is a 294-residue protein sequence, read N- to C-terminus: Survival motor neuron protein (294 aa).

Residues 1–10 (MAMSSGGSGS) are compositionally biased toward gly residues. A disordered region spans residues 1–32 (MAMSSGGSGSGVPEQEDAVLFRRGTGQSDDSD). Ala-2 carries the post-translational modification N-acetylalanine. Ser-4, Ser-5, and Ser-8 each carry phosphoserine; by PKA. The interval 13-44 (PEQEDAVLFRRGTGQSDDSDIWDDTALIKAYD) is P1 (binding site for GEMIN2). Phosphothreonine is present on Thr-25. A phosphoserine mark is found at Ser-28 and Ser-31. Residue Lys-51 forms a Glycyl lysine isopeptide (Lys-Gly) (interchain with G-Cter in SUMO2) linkage. The tract at residues 60 to 88 (CETSGKSKTTPKRKPAKKNKSQKKNTAAS) is disordered. Positions 68–82 (TTPKRKPAKKNKSQK) are enriched in basic residues. The residue at position 69 (Thr-69) is a Phosphothreonine. Position 85 is a phosphothreonine; by PKA (Thr-85). Residues 91-151 (QWKVGDKCSA…LSPICEVANN (61 aa)) enclose the Tudor domain. The interval 97–209 (KCSAIWSEDG…MPGPRLGPGK (113 aa)) is required for interaction with RPP20/POP7. The segment covering 156–166 (AQENENESQVS) has biased composition (low complexity). Residues 156–222 (AQENENESQV…KFNGPPPPPP (67 aa)) form a disordered region. Phosphoserine; by PKA is present on Ser-187. Residues 194-204 (LPPPPPMPGPR) are compositionally biased toward pro residues. Positions 206–215 (GPGKPGLKFN) are enriched in low complexity. Lys-209 participates in a covalent cross-link: Glycyl lysine isopeptide (Lys-Gly) (interchain with G-Cter in SUMO2). The segment at 240 to 267 (PPIIPPPPPICPDSLDDADALGSMLISW) is P2 (binding site for SM B). The required for interaction with SYNCRIP stretch occupies residues 279 to 294 (GFRQNQKEGRCSHSLN).

It belongs to the SMN family. Homooligomer; may form higher order homooligomers in the dimer to octamer range. Part of the core SMN complex that contains SMN1, GEMIN2/SIP1, DDX20/GEMIN3, GEMIN4, GEMIN5, GEMIN6, GEMIN7, GEMIN8 and STRAP/UNRIP. Part of the SMN-Sm complex that contains SMN1, GEMIN2/SIP1, DDX20/GEMIN3, GEMIN4, GEMIN5, GEMIN6, GEMIN7, GEMIN8, STRAP/UNRIP and the Sm proteins SNRPB, SNRPD1, SNRPD2, SNRPD3, SNRPE, SNRPF and SNRPG. Component of an import snRNP complex composed of KPNB1, RNUT1, SMN1 and ZNF259. Interacts with DDX20, FBL, NOLA1, RNUT1, SYNCRIP and with several spliceosomal snRNP core Sm proteins, including SNRPB, SNRPD1, SNRPD2, SNRPD3, SNRPE and ILF3. Interacts with GEMIN2; the interaction is direct. Interacts with GEMIN3; the interaction is direct. Interacts with GEMIN8; the interaction is direct. Interacts with SNRPB; the interaction is direct. Interacts (via Tudor domain) with SNRPD1 (via C-terminus); the interaction is direct. Interacts with SNRPD2; the interaction is direct. Interacts (via Tudor domain) with SNRPD3 (via C-terminus); the interaction is direct. Interacts with SNRPE; the interaction is direct. Interacts with OSTF1, LSM10, LSM11 and RPP20/POP7. Interacts (via C-terminal region) with ZPR1 (via C-terminal region). Interacts (via Tudor domain) with COIL. Interacts with SETX; recruits SETX to POLR2A. Interacts with POLR2A (via the C-terminal domain (CTD)). Interacts with PRMT5. Interacts with XRN2. Interacts (via C-terminus) with FMR1 (via C-terminus); the interaction is direct and occurs in a RNA-independent manner. Interacts (via Tudor domain) with SF3B2 ('Arg-508'-methylated form). Interacts with WRAP53/TCAB1. Interacts (via Tudor domain) with ELAVL4 in an RNA-independent manner; the interaction is required for localization of ELAVL4 to RNA granules. Interacts with FRG1.

The protein resides in the nucleus. Its subcellular location is the gem. The protein localises to the cajal body. It localises to the cytoplasm. It is found in the cytoplasmic granule. The protein resides in the perikaryon. Its subcellular location is the cell projection. The protein localises to the neuron projection. It localises to the axon. It is found in the myofibril. The protein resides in the sarcomere. Its subcellular location is the z line. In terms of biological role, the SMN complex catalyzes the assembly of small nuclear ribonucleoproteins (snRNPs), the building blocks of the spliceosome, and thereby plays an important role in the splicing of cellular pre-mRNAs. Most spliceosomal snRNPs contain a common set of Sm proteins SNRPB, SNRPD1, SNRPD2, SNRPD3, SNRPE, SNRPF and SNRPG that assemble in a heptameric protein ring on the Sm site of the small nuclear RNA to form the core snRNP (Sm core). In the cytosol, the Sm proteins SNRPD1, SNRPD2, SNRPE, SNRPF and SNRPG are trapped in an inactive 6S pICln-Sm complex by the chaperone CLNS1A that controls the assembly of the core snRNP. To assemble core snRNPs, the SMN complex accepts the trapped 5Sm proteins from CLNS1A forming an intermediate. Binding of snRNA inside 5Sm ultimately triggers eviction of the SMN complex, thereby allowing binding of SNRPD3 and SNRPB to complete assembly of the core snRNP. Within the SMN complex, SMN1 acts as a structural backbone and together with GEMIN2 it gathers the Sm complex subunits. Ensures the correct splicing of U12 intron-containing genes that may be important for normal motor and proprioceptive neurons development. Also required for resolving RNA-DNA hybrids created by RNA polymerase II, that form R-loop in transcription terminal regions, an important step in proper transcription termination. May also play a role in the metabolism of small nucleolar ribonucleoprotein (snoRNPs). This Pongo abelii (Sumatran orangutan) protein is Survival motor neuron protein (SMN1).